We begin with the raw amino-acid sequence, 198 residues long: NADH-quinone oxidoreductase subunit C (198 aa).

This sequence belongs to the complex I 30 kDa subunit family. In terms of assembly, NDH-1 is composed of 14 different subunits. Subunits NuoB, C, D, E, F, and G constitute the peripheral sector of the complex.

The protein resides in the cell inner membrane. The catalysed reaction is a quinone + NADH + 5 H(+)(in) = a quinol + NAD(+) + 4 H(+)(out). In terms of biological role, NDH-1 shuttles electrons from NADH, via FMN and iron-sulfur (Fe-S) centers, to quinones in the respiratory chain. The immediate electron acceptor for the enzyme in this species is believed to be ubiquinone. Couples the redox reaction to proton translocation (for every two electrons transferred, four hydrogen ions are translocated across the cytoplasmic membrane), and thus conserves the redox energy in a proton gradient. This Janthinobacterium sp. (strain Marseille) (Minibacterium massiliensis) protein is NADH-quinone oxidoreductase subunit C.